A 291-amino-acid chain; its full sequence is 2-C-methyl-D-erythritol 4-phosphate cytidylyltransferase (291 aa).

The tract at residues 1–23 (MTERDFDTPVETPTVQPAPAQGA) is disordered.

It belongs to the IspD/TarI cytidylyltransferase family. IspD subfamily.

The enzyme catalyses 2-C-methyl-D-erythritol 4-phosphate + CTP + H(+) = 4-CDP-2-C-methyl-D-erythritol + diphosphate. It participates in isoprenoid biosynthesis; isopentenyl diphosphate biosynthesis via DXP pathway; isopentenyl diphosphate from 1-deoxy-D-xylulose 5-phosphate: step 2/6. Functionally, catalyzes the formation of 4-diphosphocytidyl-2-C-methyl-D-erythritol from CTP and 2-C-methyl-D-erythritol 4-phosphate (MEP). In Bifidobacterium longum (strain NCC 2705), this protein is 2-C-methyl-D-erythritol 4-phosphate cytidylyltransferase.